The chain runs to 364 residues: MITTQKKKKNRFLPDFDKQSIYSLRYEEMQDWLVEHGQQKFRAKQIFQWLYEKRVDSIDEMTNLSKDLREVLKDNFTMTTLETVVKQESRDGTIKFLFELQDGYTIETVLMRHEYGNSVCVTTQVGCRIGCTFCASTLGGLKRNLEAGEIVSQVLTVQKVLDATDERVSQIVIMGIGEPFENYDEMMDFLKIVNYDNGLNIGARHITVSTSGIIPRIYDFAEEDIQINFAVSLHAANDEIRSKLMPINRAYSIDKLMEAIQYYQEKTNRRITFEYGLFGGVNDQLTHARELAHLIQNLNCHVNLIPVNHVPERNYVKTPKEDIFKFEKELKRLGINATIRREQGSDIDAACGQLRAKERQVETR.

Glu107 functions as the Proton acceptor in the catalytic mechanism. The Radical SAM core domain occupies 113 to 346 (HEYGNSVCVT…ATIRREQGSD (234 aa)). Cys120 and Cys351 are joined by a disulfide. [4Fe-4S] cluster-binding residues include Cys127, Cys131, and Cys134. S-adenosyl-L-methionine is bound by residues 177–178 (GE), Ser209, 232–234 (SLH), and Asn308. The S-methylcysteine intermediate role is filled by Cys351.

The protein belongs to the radical SAM superfamily. RlmN family. Requires [4Fe-4S] cluster as cofactor.

It localises to the cytoplasm. It carries out the reaction adenosine(2503) in 23S rRNA + 2 reduced [2Fe-2S]-[ferredoxin] + 2 S-adenosyl-L-methionine = 2-methyladenosine(2503) in 23S rRNA + 5'-deoxyadenosine + L-methionine + 2 oxidized [2Fe-2S]-[ferredoxin] + S-adenosyl-L-homocysteine. The enzyme catalyses adenosine(37) in tRNA + 2 reduced [2Fe-2S]-[ferredoxin] + 2 S-adenosyl-L-methionine = 2-methyladenosine(37) in tRNA + 5'-deoxyadenosine + L-methionine + 2 oxidized [2Fe-2S]-[ferredoxin] + S-adenosyl-L-homocysteine. In terms of biological role, specifically methylates position 2 of adenine 2503 in 23S rRNA and position 2 of adenine 37 in tRNAs. Confers resistance to some classes of antibiotics. This is Probable dual-specificity RNA methyltransferase RlmN from Staphylococcus carnosus (strain TM300).